Consider the following 340-residue polypeptide: MTKPIILTGDRPTGKLHLGHYVGSLKNRVFLQNENKYKMFVFLADQQALTDHAKESELIQESIGNVALDYLSVGLDPKQSTIFIQSQIPELAELSMYYMNLVSLARLERNPTVKTEIAQKGFGESIPSGFLVYPVSQAADITAFKANLVPVGNDQKPMIEQTREIVRSFNHTYHTDCLVEPEGIYPENEKAGRLPGLDGNAKMSKSLGNGIYLSDDADTVRKKVMSMYTDPNHIKIEDPGQIEGNMVFHYLDIFARKEDQADIEAMKEHYQIGGLGDVKTKRYLLDILERELAPIRERRLEYAKDMGEVFRMLQEGSQKARTVAAKTLSEVKSAMGINYF.

ATP is bound by residues 11 to 13 (RPT) and 19 to 20 (GH). Residues 12–20 (PTGKLHLGH) carry the 'HIGH' region motif. D140 lines the L-tryptophan pocket. ATP contacts are provided by residues 152–154 (GND), L194, and 202–206 (KMSKS). A 'KMSKS' region motif is present at residues 202–206 (KMSKS).

It belongs to the class-I aminoacyl-tRNA synthetase family. As to quaternary structure, homodimer.

It is found in the cytoplasm. It catalyses the reaction tRNA(Trp) + L-tryptophan + ATP = L-tryptophyl-tRNA(Trp) + AMP + diphosphate + H(+). In terms of biological role, catalyzes the attachment of tryptophan to tRNA(Trp). This chain is Tryptophan--tRNA ligase, found in Streptococcus pyogenes serotype M1.